The chain runs to 223 residues: Putative protein phosphatase 2C 63 (223 aa).

Residues 1–22 (MASSQQAVRETGRGRASSSSAG) form a disordered region. Residues 1–212 (MASSQQAVRE…RNFHVHSSHV (212 aa)) form the PPM-type phosphatase domain.

This sequence belongs to the PP2C family.

It catalyses the reaction O-phospho-L-seryl-[protein] + H2O = L-seryl-[protein] + phosphate. The catalysed reaction is O-phospho-L-threonyl-[protein] + H2O = L-threonyl-[protein] + phosphate. The chain is Putative protein phosphatase 2C 63 from Oryza sativa subsp. japonica (Rice).